Reading from the N-terminus, the 78-residue chain is Acyl carrier protein (78 aa).

The 76-residue stretch at 2 to 77 (STIEERVKKI…AAIDYVKAHQ (76 aa)) folds into the Carrier domain. Ser37 is modified (O-(pantetheine 4'-phosphoryl)serine).

The protein belongs to the acyl carrier protein (ACP) family. 4'-phosphopantetheine is transferred from CoA to a specific serine of apo-ACP by AcpS. This modification is essential for activity because fatty acids are bound in thioester linkage to the sulfhydryl of the prosthetic group.

The protein resides in the cytoplasm. Its pathway is lipid metabolism; fatty acid biosynthesis. Its function is as follows. Carrier of the growing fatty acid chain in fatty acid biosynthesis. In Pseudomonas putida (strain ATCC 47054 / DSM 6125 / CFBP 8728 / NCIMB 11950 / KT2440), this protein is Acyl carrier protein.